The sequence spans 317 residues: ADIPOR-like receptor IZH1 (317 aa).

Residues 1–80 (MSEERGMKEQ…FNNESINIYT (80 aa)) lie on the Lumenal side of the membrane. A glycan (N-linked (GlcNAc...) asparagine) is linked at Asn73. A helical transmembrane segment spans residues 81-101 (HLIPGVAYLVLFLIFADLVLA). Topologically, residues 102-113 (QLLPGLDAGEHR) are cytoplasmic. The chain crosses the membrane as a helical span at residues 114–136 (MLRFYLLGAFTCLACSSCFHCLK). Residues 137-148 (QHSEPHSRLWSK) are Lumenal-facing. The chain crosses the membrane as a helical span at residues 149 to 169 (VDYLGILAQITCSTISLLYYG). The Cytoplasmic segment spans residues 170 to 175 (YHSYPS). Residues 176–196 (HFVFFSTLTVALCSACAVLVL) form a helical membrane-spanning segment. N-linked (GlcNAc...) asparagine glycosylation is present at Asn197. Residues 197–210 (NDSFNTVAFRPLRA) are Lumenal-facing. A helical membrane pass occupies residues 211–231 (FLFMAFGLSGVIPVLAGSYQF). At 232–243 (GFAEWAARIQLK) the chain is on the cytoplasmic side. The helical transmembrane segment at 244-264 (YVLYEAVFYITGALVYGFRIP) threads the bilayer. The Lumenal portion of the chain corresponds to 265–283 (ERFAPGKFDMVGHSHQIFH). Residues 284–304 (LLVVLGTLCHFRAVTGSYIFI) traverse the membrane as a helical segment. Residues 305–317 (CTGKHYSSLLMFI) are Cytoplasmic-facing.

Belongs to the ADIPOR family.

Its subcellular location is the endoplasmic reticulum membrane. Functionally, ADIPOR-like receptor involved in zinc metabolism either by altering membrane sterol content or by directly altering cellular zinc levels. This is ADIPOR-like receptor IZH1 (IZH1) from Eremothecium gossypii (strain ATCC 10895 / CBS 109.51 / FGSC 9923 / NRRL Y-1056) (Yeast).